We begin with the raw amino-acid sequence, 97 residues long: uncharacterized protein (97 aa).

Residues 1 to 21 (MLLHGLGRMNIIFICFPSLAC) form the signal peptide.

This is an uncharacterized protein from Schizosaccharomyces pombe (strain 972 / ATCC 24843) (Fission yeast).